The primary structure comprises 373 residues: 4-hydroxy-3-methylbut-2-en-1-yl diphosphate synthase (flavodoxin) (373 aa).

4 residues coordinate [4Fe-4S] cluster: Cys270, Cys273, Cys305, and Glu312.

The protein belongs to the IspG family. The cofactor is [4Fe-4S] cluster.

It carries out the reaction (2E)-4-hydroxy-3-methylbut-2-enyl diphosphate + oxidized [flavodoxin] + H2O + 2 H(+) = 2-C-methyl-D-erythritol 2,4-cyclic diphosphate + reduced [flavodoxin]. It participates in isoprenoid biosynthesis; isopentenyl diphosphate biosynthesis via DXP pathway; isopentenyl diphosphate from 1-deoxy-D-xylulose 5-phosphate: step 5/6. Its function is as follows. Converts 2C-methyl-D-erythritol 2,4-cyclodiphosphate (ME-2,4cPP) into 1-hydroxy-2-methyl-2-(E)-butenyl 4-diphosphate. The protein is 4-hydroxy-3-methylbut-2-en-1-yl diphosphate synthase (flavodoxin) of Klebsiella pneumoniae subsp. pneumoniae (strain ATCC 700721 / MGH 78578).